A 75-amino-acid polypeptide reads, in one-letter code: Small ribosomal subunit protein bS18c (75 aa).

Belongs to the bacterial ribosomal protein bS18 family. As to quaternary structure, part of the 30S ribosomal subunit.

The protein resides in the plastid. Its subcellular location is the chloroplast. This chain is Small ribosomal subunit protein bS18c, found in Psilotum nudum (Whisk fern).